The sequence spans 137 residues: Acidic phospholipase A2 beta-bungarotoxin A6 chain (137 aa).

A signal peptide spans 1-9 (AVCVSLLGA). Residues 10 to 17 (ANIPPQHL) constitute a propeptide that is removed on maturation. Disulfide bonds link cysteine 44-cysteine 136, cysteine 46-cysteine 62, cysteine 61-cysteine 117, cysteine 68-cysteine 110, cysteine 78-cysteine 103, and cysteine 96-cysteine 108. 3 residues coordinate Ca(2+): tyrosine 45, glycine 47, and glycine 49. Histidine 65 is a catalytic residue. Residue aspartate 66 participates in Ca(2+) binding. Residue aspartate 111 is part of the active site.

The protein belongs to the phospholipase A2 family. Group I subfamily. D49 sub-subfamily. As to quaternary structure, heterodimer; disulfide-linked. The A chains have phospholipase A2 activity and the B chains show homology with the basic protease inhibitors. Ca(2+) serves as cofactor. In terms of tissue distribution, expressed by the venom gland.

It localises to the secreted. The enzyme catalyses a 1,2-diacyl-sn-glycero-3-phosphocholine + H2O = a 1-acyl-sn-glycero-3-phosphocholine + a fatty acid + H(+). Functionally, snake venom phospholipase A2 (PLA2) that inhibits neuromuscular transmission by blocking acetylcholine release from the nerve termini. PLA2 catalyzes the calcium-dependent hydrolysis of the 2-acyl groups in 3-sn-phosphoglycerides. In Bungarus multicinctus (Many-banded krait), this protein is Acidic phospholipase A2 beta-bungarotoxin A6 chain.